Here is a 130-residue protein sequence, read N- to C-terminus: UPF0251 protein MmarC7_1642 (130 aa).

Belongs to the UPF0251 family.

The protein is UPF0251 protein MmarC7_1642 of Methanococcus maripaludis (strain C7 / ATCC BAA-1331).